A 206-amino-acid polypeptide reads, in one-letter code: Imidazoleglycerol-phosphate dehydratase (206 aa).

The protein belongs to the imidazoleglycerol-phosphate dehydratase family.

The protein localises to the cytoplasm. The catalysed reaction is D-erythro-1-(imidazol-4-yl)glycerol 3-phosphate = 3-(imidazol-4-yl)-2-oxopropyl phosphate + H2O. It functions in the pathway amino-acid biosynthesis; L-histidine biosynthesis; L-histidine from 5-phospho-alpha-D-ribose 1-diphosphate: step 6/9. The chain is Imidazoleglycerol-phosphate dehydratase from Saccharopolyspora erythraea (strain ATCC 11635 / DSM 40517 / JCM 4748 / NBRC 13426 / NCIMB 8594 / NRRL 2338).